A 374-amino-acid chain; its full sequence is ORC1-type DNA replication protein 6 (374 aa).

ATP contacts are provided by residues 66–70 (TGKTT), Y209, and R221.

The protein belongs to the CDC6/cdc18 family.

Functionally, involved in regulation of DNA replication. This Halobacterium salinarum (strain ATCC 700922 / JCM 11081 / NRC-1) (Halobacterium halobium) protein is ORC1-type DNA replication protein 6 (orc6).